Consider the following 158-residue polypeptide: Ribosomal RNA large subunit methyltransferase H (158 aa).

Residues Leu-73, Gly-107, and Phe-126–Leu-131 each bind S-adenosyl-L-methionine.

It belongs to the RNA methyltransferase RlmH family. In terms of assembly, homodimer.

It localises to the cytoplasm. The enzyme catalyses pseudouridine(1915) in 23S rRNA + S-adenosyl-L-methionine = N(3)-methylpseudouridine(1915) in 23S rRNA + S-adenosyl-L-homocysteine + H(+). Functionally, specifically methylates the pseudouridine at position 1915 (m3Psi1915) in 23S rRNA. The protein is Ribosomal RNA large subunit methyltransferase H of Rubrobacter xylanophilus (strain DSM 9941 / JCM 11954 / NBRC 16129 / PRD-1).